The sequence spans 1514 residues: Polycomb group protein ASXL1 (1514 aa).

One can recognise an HTH HARE-type domain in the interval 11 to 86 (RTWAEAARLV…RISLFTLKKD (76 aa)). Disordered stretches follow at residues 95 to 170 (ATVD…VMLP) and 183 to 249 (HVEP…RGEE). Acidic residues predominate over residues 98–107 (DGDEPEDSAD). The span at 111-145 (CGSNEASTVSGENDVSLDETSSNASCSTESQSRPL) shows a compositional bias: polar residues. The span at 199–209 (SGSPSSSSSGS) shows a compositional bias: low complexity. Residues 243–246 (KRNR) form an interaction with nucleosomal DNA forming a DNA clamp with BAP1 region. The DEUBAD domain maps to 255-364 (PGSILVNTNL…FEDYYGQKLG (110 aa)). The short motif at 284–288 (LLLLL) is the LXXLL motif 1 element. Positions 300–655 (LLRLSGSALN…GGGSGAIDEG (356 aa)) are interaction with NCOA1. Residues 310–315 (NEFFTH) carry the NEF motif motif. The segment at 336 to 346 (RLRQEMEKEKK) is interaction with nucleosomal DNA. Disordered stretches follow at residues 378-543 (EEAK…EDRQ), 635-823 (TTAI…FDNM), 895-914 (SDPE…EKEW), 926-952 (SVPQ…SDSE), and 964-995 (ISEA…VDAS). The Nuclear localization signal motif lies at 408–415 (FKKRSRPD). A compositionally biased stretch (polar residues) spans 458 to 473 (VNSTPGPDVSSATSGQ). Phosphoserine is present on residues serine 498 and serine 500. 2 stretches are compositionally biased toward basic and acidic residues: residues 514-525 (QETKDQKRKSFE) and 533-543 (PEKKPRLEDRQ). The segment covering 638–654 (IGGGGGPGGGGSGAIDE) has biased composition (gly residues). Over residues 678–692 (PSTSGESASDLQRTQ) the composition is skewed to polar residues. Basic and acidic residues-rich tracts occupy residues 713-728 (ARRE…ESCL) and 779-793 (LLDD…REDQ). Residues 808–812 (LGDLL) carry the LXXLL motif 2 motif. A compositionally biased stretch (polar residues) spans 971–980 (HSESTDTASD). Residues 1082–1087 (LVMHLL) form a required for interaction with RARA region. Disordered regions lie at residues 1095 to 1131 (KVLP…ENNR), 1213 to 1234 (EQKE…GQCL), and 1256 to 1338 (SEQT…VSAD). Positions 1119–1129 (DRGTLQGTGEN) are enriched in polar residues. 2 stretches are compositionally biased toward polar residues: residues 1256 to 1269 (SEQT…QNNA) and 1313 to 1324 (SKNSVSGGVQTT). The segment at 1476-1513 (SLQCACSLKAMIMCQGCGAFCHDDCIGPSKLCVLCLVV) adopts a PHD-type; atypical zinc-finger fold.

The protein belongs to the Asx family. In terms of assembly, core component of the polycomb repressive deubiquitinase (PR-DUB) complex, at least composed of BAP1, one of ASXL1, ASXL2 or (probably) ASXL3, and one of MBD5 or MBD6. Distinct combinations of ASXL and MBD proteins may preferentially bind specific histone modification marks. The PR-DUB core associates with a number of accessory proteins, including FOXK1, FOXK2, KDM1B, HCFC1 and OGT; KDM1B specifically associates with ASXL2 PR-DUB complexes. Interacts (via DEUBAD domain) with BAP1 (via ULD domain); the interaction is direct and forms a ubiquitin binding cleft. The interaction with BAP1 is important for maintaining BAP1 stability. Together with BAP1, associates (via DEUBAD domain) with nucleosomes; interacts with nucleosomal DNA and stabilizes the orientation of the nucleosome to line up the PR-DUB complex active site with its H2AK118ub1 substrate. Interacts (via PHD domain) with MBD5 and MBD6 (via MBD domain); the interaction is probably direct and mediates association of MBD proteins with the PR-DUB core. Interacts with RARA, RXRA. Interacts with NCOA1. Interacts with PPARA and PPARG. Post-translationally, ubiquitinated by TRIP12, leading to its subsequent degradation following binding of N(6)-methyladenine methylated DNA (6mA).

The protein localises to the nucleus. Its function is as follows. Probable Polycomb group (PcG) protein involved in transcriptional regulation mediated by ligand-bound nuclear hormone receptors, such as retinoic acid receptors (RARs) and peroxisome proliferator-activated receptor gamma (PPARG). Acts as a coactivator of RARA and RXRA through association with NCOA1. Acts as a corepressor for PPARG and suppresses its adipocyte differentiation-inducing activity. Non-catalytic component of the PR-DUB complex, a complex that specifically mediates deubiquitination of histone H2A monoubiquitinated at 'Lys-119' (H2AK119ub1). Acts as a sensor of N(6)-methyladenine methylation on DNA (6mA): recognizes and binds 6mA DNA, leading to its ubiquitination and degradation by TRIP12, thereby inactivating the PR-DUB complex and regulating Polycomb silencing. The PR-DUB complex is an epigenetic regulator of gene expression and acts as a transcriptional coactivator, affecting genes involved in development, cell communication, signaling, cell proliferation and cell viability. ASXL1, ASXL2 and ASXL3 function redundantly in the PR-DUB complex. The ASXL proteins are essential for chromatin recruitment and transcriptional activation of associated genes. ASXL1 and ASXL2 are important for BAP1 protein stability. Together with BAP1, negatively regulates epithelial-mesenchymal transition (EMT) of trophoblast stem cells during placental development by regulating genes involved in epithelial cell integrity, cell adhesion and cytoskeletal organization. The polypeptide is Polycomb group protein ASXL1 (Asxl1) (Mus musculus (Mouse)).